The chain runs to 249 residues: Proteasome subunit alpha (249 aa).

It belongs to the peptidase T1A family. In terms of assembly, the 20S proteasome core is composed of 14 alpha and 14 beta subunits that assemble into four stacked heptameric rings, resulting in a barrel-shaped structure. The two inner rings, each composed of seven catalytic beta subunits, are sandwiched by two outer rings, each composed of seven alpha subunits. The catalytic chamber with the active sites is on the inside of the barrel. Has a gated structure, the ends of the cylinder being occluded by the N-termini of the alpha-subunits. Is capped at one or both ends by the proteasome regulatory ATPase, PAN.

Its subcellular location is the cytoplasm. The formation of the proteasomal ATPase PAN-20S proteasome complex, via the docking of the C-termini of PAN into the intersubunit pockets in the alpha-rings, triggers opening of the gate for substrate entry. Interconversion between the open-gate and close-gate conformations leads to a dynamic regulation of the 20S proteasome proteolysis activity. Its function is as follows. Component of the proteasome core, a large protease complex with broad specificity involved in protein degradation. The sequence is that of Proteasome subunit alpha from Methanosarcina barkeri (strain Fusaro / DSM 804).